Here is a 477-residue protein sequence, read N- to C-terminus: Glycogen synthase (477 aa).

Lysine 15 contacts ADP-alpha-D-glucose.

The protein belongs to the glycosyltransferase 1 family. Bacterial/plant glycogen synthase subfamily.

The enzyme catalyses [(1-&gt;4)-alpha-D-glucosyl](n) + ADP-alpha-D-glucose = [(1-&gt;4)-alpha-D-glucosyl](n+1) + ADP + H(+). Its pathway is glycan biosynthesis; glycogen biosynthesis. In terms of biological role, synthesizes alpha-1,4-glucan chains using ADP-glucose. The protein is Glycogen synthase of Glaesserella parasuis serovar 5 (strain SH0165) (Haemophilus parasuis).